The sequence spans 621 residues: Membrane protein insertase YidC (621 aa).

The next 6 helical transmembrane spans lie at 1–21, 363–383, 436–456, 486–506, 527–547, and 549–569; these read MDKN…GFSI, GWGL…KVLV, MGGC…FFFV, IPLL…TNIL, LMMY…SSGL, and YYYF…RKTT.

It belongs to the OXA1/ALB3/YidC family. Type 1 subfamily. In terms of assembly, interacts with the Sec translocase complex via SecD. Specifically interacts with transmembrane segments of nascent integral membrane proteins during membrane integration.

The protein resides in the cell inner membrane. Required for the insertion and/or proper folding and/or complex formation of integral membrane proteins into the membrane. Involved in integration of membrane proteins that insert both dependently and independently of the Sec translocase complex, as well as at least some lipoproteins. Aids folding of multispanning membrane proteins. The polypeptide is Membrane protein insertase YidC (Phocaeicola vulgatus (strain ATCC 8482 / DSM 1447 / JCM 5826 / CCUG 4940 / NBRC 14291 / NCTC 11154) (Bacteroides vulgatus)).